Reading from the N-terminus, the 317-residue chain is Olfactory receptor 10A5 (317 aa).

Topologically, residues 1 to 26 are extracellular; sequence MAIGNWTEISEFILMSFSSLPTEIQS. N5 is a glycosylation site (N-linked (GlcNAc...) asparagine). Residues 27-47 traverse the membrane as a helical segment; the sequence is LLFLTFLTIYLVTLKGNSLII. Over 48–55 the chain is Cytoplasmic; the sequence is LVTLADPM. A helical transmembrane segment spans residues 56-76; it reads LHSPMYFFLRNLSFLEIGFNL. Topologically, residues 77 to 100 are extracellular; the sequence is VIVPKMLGTLLAQDTTISFLGCAT. C98 and C190 are disulfide-bonded. The helical transmembrane segment at 101–121 threads the bilayer; that stretch reads QMYFFFFFGVAECFLLATMAY. The Cytoplasmic segment spans residues 122–140; sequence DRYVAICSPLHYPVIMNQR. Residues 141-161 traverse the membrane as a helical segment; it reads TRAKLAAASWFPGFPVATVQT. The Extracellular segment spans residues 162–198; sequence TWLFSFPFCGTNKVNHFFCDSPPVLKLVCADTALFEI. Residues 199–218 traverse the membrane as a helical segment; it reads YAIVGTILVVMIPCLLILCS. The Cytoplasmic portion of the chain corresponds to 219 to 238; the sequence is YTRIAAAILKIPSAKGKHKA. Residues 239-259 traverse the membrane as a helical segment; sequence FSTCSSHLLVVSLFYISSSLT. Over 260–272 the chain is Extracellular; that stretch reads YFWPKSNNSPESK. A helical transmembrane segment spans residues 273–293; it reads KLLSLSYTVVTPMLNPIIYSL. Residues 294 to 317 are Cytoplasmic-facing; that stretch reads RNSEVKNALSRTFHKVLALRNCIP.

This sequence belongs to the G-protein coupled receptor 1 family. Expressed in the tongue.

It is found in the cell membrane. In terms of biological role, odorant receptor (Potential). May be involved in taste perception. This Homo sapiens (Human) protein is Olfactory receptor 10A5 (OR10A5).